The chain runs to 324 residues: Glyoxylate/hydroxypyruvate reductase B (324 aa).

Residues Arg237 and Glu266 contribute to the active site. Residue His285 is the Proton donor of the active site.

Belongs to the D-isomer specific 2-hydroxyacid dehydrogenase family. GhrB subfamily. As to quaternary structure, homodimer.

Its subcellular location is the cytoplasm. It carries out the reaction glycolate + NADP(+) = glyoxylate + NADPH + H(+). It catalyses the reaction (R)-glycerate + NAD(+) = 3-hydroxypyruvate + NADH + H(+). The catalysed reaction is (R)-glycerate + NADP(+) = 3-hydroxypyruvate + NADPH + H(+). Functionally, catalyzes the NADPH-dependent reduction of glyoxylate and hydroxypyruvate into glycolate and glycerate, respectively. In Escherichia coli O6:H1 (strain CFT073 / ATCC 700928 / UPEC), this protein is Glyoxylate/hydroxypyruvate reductase B.